We begin with the raw amino-acid sequence, 111 residues long: MKVLVLLLVTLAVVYAAPDPRGILINLEDGEICMNSAQCKSSCCQHFSPLGVARCTRKASENSECSPKTLYGIYYKCPCERGLTCESDRTIIGAITNTNYGICLDAGRSKE.

A signal peptide spans 1–16 (MKVLVLLLVTLAVVYA). Residues 17–21 (APDPR) constitute a propeptide, enterostatin, activation peptide. 5 cysteine pairs are disulfide-bonded: Cys33-Cys44, Cys39-Cys55, Cys43-Cys77, Cys65-Cys85, and Cys79-Cys103.

It belongs to the colipase family. Forms a 1:1 stoichiometric complex with pancreatic lipase. Expressed by the pancreas.

Its subcellular location is the secreted. In terms of biological role, colipase is a cofactor of pancreatic lipase. It allows the lipase to anchor itself to the lipid-water interface. Without colipase the enzyme is washed off by bile salts, which have an inhibitory effect on the lipase. Its function is as follows. Enterostatin has a biological activity as a satiety signal. This chain is Colipase (CLPS), found in Ictidomys tridecemlineatus (Thirteen-lined ground squirrel).